A 371-amino-acid chain; its full sequence is Cytochrome b (371 aa).

Transmembrane regions (helical) follow at residues 24 to 44, 68 to 89, 104 to 124, and 169 to 189; these read FGSMLLACLTLQITTGFFLAL, WTMQNLHSIGASMFFICIYIHI, WLSGITLLATLMATAFFGYVL, and FFALHFILPFAIVSLTSVHIV. Heme b-binding residues include His-74 and His-88. Heme b contacts are provided by His-173 and His-187. Position 192 (His-192) interacts with a ubiquinone. The next 4 helical transmembrane spans lie at 217 to 237, 279 to 299, 311 to 331, and 338 to 357; these read YKDTLMLTFMITTLFMIMSFA, LGGTLALVMSIAILMTMPFTH, LSQLMFWTLIATFITITWTAT, and FITIGQLTSILYFSFFMTNP.

The protein belongs to the cytochrome b family. As to quaternary structure, the cytochrome bc1 complex contains 3 respiratory subunits (MT-CYB, CYC1 and UQCRFS1), 2 core proteins (UQCRC1 and UQCRC2) and probably 6 low-molecular weight proteins. Heme b serves as cofactor.

The protein resides in the mitochondrion inner membrane. Functionally, component of the ubiquinol-cytochrome c reductase complex (complex III or cytochrome b-c1 complex) that is part of the mitochondrial respiratory chain. The b-c1 complex mediates electron transfer from ubiquinol to cytochrome c. Contributes to the generation of a proton gradient across the mitochondrial membrane that is then used for ATP synthesis. This chain is Cytochrome b (MT-CYB), found in Homoroselaps lacteus (Spotted harlequin snake).